Reading from the N-terminus, the 672-residue chain is Putative sodium/calcium exchanger 7 (672 aa).

Positions 1–23 (MAQPSILFSLTLIFLISIKSCDA) are cleaved as a signal peptide. 12 consecutive transmembrane segments (helical) span residues 88–108 (VILI…VSSA), 130–150 (VAGV…GSIA), 164–184 (LGEL…TIIL), 196–216 (IRDL…FVFY), 221–241 (LWMP…VIGA), 451–471 (LTLL…QFFL), 479–499 (PGLW…IMVF), 522–542 (IAWI…LGVV), 551–571 (GLTI…VSVV), 581–601 (AAAI…PFTI), 620–640 (LILF…VQKF), and 649–669 (VLIS…TGVL).

This sequence belongs to the Ca(2+):cation antiporter (CaCA) (TC 2.A.19) family.

It is found in the membrane. This chain is Putative sodium/calcium exchanger 7 (ncx-7), found in Caenorhabditis elegans.